Consider the following 489-residue polypeptide: Lysine--tRNA ligase (489 aa).

Mg(2+) is bound by residues Glu399 and Glu406.

This sequence belongs to the class-II aminoacyl-tRNA synthetase family. As to quaternary structure, homodimer. Mg(2+) serves as cofactor.

Its subcellular location is the cytoplasm. The catalysed reaction is tRNA(Lys) + L-lysine + ATP = L-lysyl-tRNA(Lys) + AMP + diphosphate. This Roseiflexus sp. (strain RS-1) protein is Lysine--tRNA ligase.